We begin with the raw amino-acid sequence, 201 residues long: Recombination protein RecR (201 aa).

A C4-type zinc finger spans residues 60–75 (CATCGNFDTVQPCAVC). One can recognise a Toprim domain in the interval 83–178 (GIICVVEDVP…DVTRLAHGVP (96 aa)).

Belongs to the RecR family.

May play a role in DNA repair. It seems to be involved in an RecBC-independent recombinational process of DNA repair. It may act with RecF and RecO. The protein is Recombination protein RecR of Hyphomonas neptunium (strain ATCC 15444).